We begin with the raw amino-acid sequence, 471 residues long: MAGEMTILGSAVLTLLLAGYLAQQYLPLPTPKVIGIDLGTTYCSVGVFFPGTGKVKVIPDENGHISIPSMVSFTDDDVYVGYESLELADSNPQNTIYDAKRFIGKVFTPEELEAEIGRYPFKVLNKNGMVEFSVTSNETITVSPEYVGSRLLLKLKEMAEEYLGMPVANAVISVPAEFDLKQRNSTIQAANLAGLKILRVINEPTAAAMAYGLHKAEVFHVLVIDLGGGTLDVSLLNKQGGMFLTRAMSGNNKLGGQDFNQRLLQYLYKQIYQTYGFLPSRKEEIHRLRQAVEMVKLNLTLHETAQMSVLLTVEENDRKGPPTSDSELPKDKFSQANDPHVDSMFGANLSEKKNGEGQVLFETEISRKLFDTLNEDLFQKILVPIQQVLKEGHLEKTEIDEVVLVGGSTRIPRIRQVIQEFFGKDPNTSVDPDLAVVTGVAIQAGIDGGSWPLQVSALEIPNKHLQKTNFN.

Positions 1–22 are cleaved as a signal peptide; the sequence is MAGEMTILGSAVLTLLLAGYLA. A disordered region spans residues 315-337; the sequence is ENDRKGPPTSDSELPKDKFSQAN.

It belongs to the heat shock protein 70 family. As to quaternary structure, binds UBQLN2.

The protein resides in the microsome. Its subcellular location is the endoplasmic reticulum. Functionally, has peptide-independent ATPase activity. The chain is Heat shock 70 kDa protein 13 (HSPA13) from Bos taurus (Bovine).